A 540-amino-acid chain; its full sequence is Glucose-6-phosphate isomerase (540 aa).

The Proton donor role is filled by glutamate 350. Catalysis depends on residues histidine 381 and lysine 503.

The protein belongs to the GPI family.

The protein localises to the cytoplasm. It catalyses the reaction alpha-D-glucose 6-phosphate = beta-D-fructose 6-phosphate. It functions in the pathway carbohydrate biosynthesis; gluconeogenesis. It participates in carbohydrate degradation; glycolysis; D-glyceraldehyde 3-phosphate and glycerone phosphate from D-glucose: step 2/4. Catalyzes the reversible isomerization of glucose-6-phosphate to fructose-6-phosphate. The sequence is that of Glucose-6-phosphate isomerase from Burkholderia lata (strain ATCC 17760 / DSM 23089 / LMG 22485 / NCIMB 9086 / R18194 / 383).